We begin with the raw amino-acid sequence, 493 residues long: Putative glycerol-3-phosphate transporter 5 (493 aa).

The next 12 membrane-spanning stretches (helical) occupy residues 25–44 (FTFH…ASFH), 83–103 (LGEL…FAGH), 113–133 (FLVF…LGYW), 145–165 (VQIV…SVVG), 185–205 (SVGN…GWGW), 207–227 (FVLP…FLVV), 292–312 (FCLF…PYYL), 328–348 (GILS…AGFI), 352–372 (IKAR…ALIM), 375–395 (VYGS…GLLV), 428–448 (AIID…AGYI), and 452–472 (GWNS…LFLV).

Belongs to the major facilitator superfamily. Organophosphate:Pi antiporter (OPA) (TC 2.A.1.4) family.

Its subcellular location is the membrane. This Arabidopsis thaliana (Mouse-ear cress) protein is Putative glycerol-3-phosphate transporter 5.